The following is a 143-amino-acid chain: MLRTMLKSKIHRATVTQADLHYVGSVTIDADLMDAADLLEGEQVTIVDIDNGARLVTYAITGERGSGVIGINGAAAHLVHPGDLVILIAYGTMQDAEARAYQPRIVFVDADNKQIDVGHDPAFVPAFDIPGAEELLNPRIGAR.

Catalysis depends on S25, which acts as the Schiff-base intermediate with substrate; via pyruvic acid. Residue S25 is modified to Pyruvic acid (Ser). T57 provides a ligand contact to substrate. Y58 acts as the Proton donor in catalysis. G73–A75 contacts substrate.

Belongs to the PanD family. In terms of assembly, heterooctamer of four alpha and four beta subunits. Pyruvate serves as cofactor. In terms of processing, is synthesized initially as an inactive proenzyme, which is activated by self-cleavage at a specific serine bond to produce a beta-subunit with a hydroxyl group at its C-terminus and an alpha-subunit with a pyruvoyl group at its N-terminus.

The protein resides in the cytoplasm. The catalysed reaction is L-aspartate + H(+) = beta-alanine + CO2. It functions in the pathway cofactor biosynthesis; (R)-pantothenate biosynthesis; beta-alanine from L-aspartate: step 1/1. Catalyzes the pyruvoyl-dependent decarboxylation of aspartate to produce beta-alanine. The protein is Aspartate 1-decarboxylase of Mycobacterium ulcerans (strain Agy99).